Reading from the N-terminus, the 589-residue chain is Protein MICRORCHIDIA 3 (589 aa).

The tract at residues 1–33 is disordered; sequence MAPESKNAGVSVVVNLDSDSDSDNDDGVGGRGA. A coiled-coil region spans residues 542–589; it reads MRCEEYVKKETELEQTVSNLAKELEETKSKCARLALLVDAKRREMQQV.

It belongs to the MORC ATPase protein family. As to quaternary structure, homodimer and heterodimer. Component of an RNA-directed DNA methylation (RdDM) complex. Mg(2+) is required as a cofactor. Mn(2+) serves as cofactor.

The protein resides in the nucleus. In terms of biological role, exhibits ATPase activity. Binds DNA/RNA in a non-specific manner and exhibits endonuclease activity. Probably involved in DNA repair. Involved in RNA-directed DNA methylation (RdDM) as a component of the RdDM machinery and required for gene silencing. May also be involved in the regulation of chromatin architecture to maintain gene silencing. This chain is Protein MICRORCHIDIA 3, found in Arabidopsis thaliana (Mouse-ear cress).